Here is a 380-residue protein sequence, read N- to C-terminus: Chaperone protein DnaJ (380 aa).

One can recognise a J domain in the interval 5 to 72 (DYYETLGVAK…QKRAAYDQYG (68 aa)). The CR-type zinc-finger motif lies at 140–218 (GKDTQIRIPS…CNGAGRIKSN (79 aa)). 8 residues coordinate Zn(2+): cysteine 153, cysteine 156, cysteine 170, cysteine 173, cysteine 192, cysteine 195, cysteine 206, and cysteine 209. CXXCXGXG motif repeat units follow at residues 153-160 (CSTCDGTG), 170-177 (CPTCSGSG), 192-199 (CPSCHGTG), and 206-213 (CTACNGAG). The interval 357-380 (LKKGGERHSPNAKSWTDRVKDLFK) is disordered.

It belongs to the DnaJ family. As to quaternary structure, homodimer. Zn(2+) is required as a cofactor.

The protein resides in the cytoplasm. Functionally, participates actively in the response to hyperosmotic and heat shock by preventing the aggregation of stress-denatured proteins and by disaggregating proteins, also in an autonomous, DnaK-independent fashion. Unfolded proteins bind initially to DnaJ; upon interaction with the DnaJ-bound protein, DnaK hydrolyzes its bound ATP, resulting in the formation of a stable complex. GrpE releases ADP from DnaK; ATP binding to DnaK triggers the release of the substrate protein, thus completing the reaction cycle. Several rounds of ATP-dependent interactions between DnaJ, DnaK and GrpE are required for fully efficient folding. Also involved, together with DnaK and GrpE, in the DNA replication of plasmids through activation of initiation proteins. This Methylibium petroleiphilum (strain ATCC BAA-1232 / LMG 22953 / PM1) protein is Chaperone protein DnaJ.